Here is a 675-residue protein sequence, read N- to C-terminus: Probable potassium transport system protein Kup (675 aa).

The segment covering 1-12 has biased composition (basic and acidic residues); the sequence is MEPAMPEHDGDH. Residues 1–25 form a disordered region; it reads MEPAMPEHDGDHASNPPHGVGIPND. Transmembrane regions (helical) follow at residues 62-82, 104-124, 153-173, 195-215, 222-242, 255-275, 300-320, 332-352, 390-410, 419-439, 450-470, and 472-492; these read ALLA…LYAL, LASL…VILI, WLFG…SIIT, IIIP…VLGT, FGPI…KGIF, FALE…GSVV, WLFF…ALLI, LLVP…ATVI, IYLP…VLAF, AYGI…MVVF, VAIV…ANVL, and IPDG…IMTT.

It belongs to the HAK/KUP transporter (TC 2.A.72) family.

Its subcellular location is the cell inner membrane. It catalyses the reaction K(+)(in) + H(+)(in) = K(+)(out) + H(+)(out). Transport of potassium into the cell. Likely operates as a K(+):H(+) symporter. The chain is Probable potassium transport system protein Kup from Gluconobacter oxydans (strain 621H) (Gluconobacter suboxydans).